Reading from the N-terminus, the 469-residue chain is 3-isopropylmalate dehydratase large subunit 1 (469 aa).

Positions 344, 404, and 407 each coordinate [4Fe-4S] cluster.

This sequence belongs to the aconitase/IPM isomerase family. LeuC type 1 subfamily. As to quaternary structure, heterodimer of LeuC and LeuD. Requires [4Fe-4S] cluster as cofactor.

It carries out the reaction (2R,3S)-3-isopropylmalate = (2S)-2-isopropylmalate. It participates in amino-acid biosynthesis; L-leucine biosynthesis; L-leucine from 3-methyl-2-oxobutanoate: step 2/4. Its function is as follows. Catalyzes the isomerization between 2-isopropylmalate and 3-isopropylmalate, via the formation of 2-isopropylmaleate. This is 3-isopropylmalate dehydratase large subunit 1 from Rubrobacter xylanophilus (strain DSM 9941 / JCM 11954 / NBRC 16129 / PRD-1).